We begin with the raw amino-acid sequence, 485 residues long: Glutamyl-tRNA(Gln) amidotransferase subunit A (485 aa).

Catalysis depends on charge relay system residues lysine 79 and serine 154. Serine 178 (acyl-ester intermediate) is an active-site residue.

This sequence belongs to the amidase family. GatA subfamily. As to quaternary structure, heterotrimer of A, B and C subunits.

The enzyme catalyses L-glutamyl-tRNA(Gln) + L-glutamine + ATP + H2O = L-glutaminyl-tRNA(Gln) + L-glutamate + ADP + phosphate + H(+). Allows the formation of correctly charged Gln-tRNA(Gln) through the transamidation of misacylated Glu-tRNA(Gln) in organisms which lack glutaminyl-tRNA synthetase. The reaction takes place in the presence of glutamine and ATP through an activated gamma-phospho-Glu-tRNA(Gln). This chain is Glutamyl-tRNA(Gln) amidotransferase subunit A, found in Clostridium botulinum (strain Eklund 17B / Type B).